Consider the following 315-residue polypeptide: Tetraacyldisaccharide 4'-kinase (315 aa).

45-52 (SVGGSGKT) is a binding site for ATP.

Belongs to the LpxK family.

It carries out the reaction a lipid A disaccharide + ATP = a lipid IVA + ADP + H(+). It functions in the pathway glycolipid biosynthesis; lipid IV(A) biosynthesis; lipid IV(A) from (3R)-3-hydroxytetradecanoyl-[acyl-carrier-protein] and UDP-N-acetyl-alpha-D-glucosamine: step 6/6. Transfers the gamma-phosphate of ATP to the 4'-position of a tetraacyldisaccharide 1-phosphate intermediate (termed DS-1-P) to form tetraacyldisaccharide 1,4'-bis-phosphate (lipid IVA). This Aquifex aeolicus (strain VF5) protein is Tetraacyldisaccharide 4'-kinase.